The primary structure comprises 377 residues: Opsin, blue-sensitive (377 aa).

Residues 1–56 (MLLHNKTLAGKALAFIAEEGYVPSMREKFLGWNVPPEYSDLVHPHWRAFPAPGKHF) lie on the Extracellular side of the membrane. The N-linked (GlcNAc...) asparagine glycan is linked to Asn-5. A helical transmembrane segment spans residues 57–81 (HIGLAIIYSMLLIMSLVGNCCVIWI). The Cytoplasmic portion of the chain corresponds to 82 to 93 (FSTSKSLRTPSN). The helical transmembrane segment at 94-119 (MFIVSLAIFDIIMAFEMPMLVISSFM) threads the bilayer. Residues 120–132 (ERMIGWEIGCDVY) lie on the Extracellular side of the membrane. Cys-129 and Cys-206 are joined by a disulfide. The chain crosses the membrane as a helical span at residues 133–152 (SVFGSISGMGQAMTNAAIAF). At 153-170 (DRYRTISCPIDGRLNSKQ) the chain is on the cytoplasmic side. Residues 171–195 (AAVIIAFTWFWVTPFTVLPLLKVWG) form a helical membrane-spanning segment. Residues 196 to 219 (RYTTEGFLTTCSFDFLTDDEDTKV) lie on the Extracellular side of the membrane. Residues 220–247 (FVTCIFIWAYVIPLIFIILFYSRLLSSI) form a helical membrane-spanning segment. Over 248 to 282 (RNHEKMLREQAKKMNVKSLVSNQDKERSAEVRIAK) the chain is Cytoplasmic. Residues 283 to 306 (VAFTIFFLFLLAWTPYATVALIGV) form a helical membrane-spanning segment. Residues 307–314 (YGNRELLT) lie on the Extracellular side of the membrane. The helical transmembrane segment at 315–339 (PVSTMLPAVFAKTVSCIDPWIYAIN) threads the bilayer. Lys-326 carries the N6-(retinylidene)lysine modification. The Cytoplasmic segment spans residues 340-377 (HPRYRQELQKRCKWMGIHEPETTSDATSAQTEKIKTDE).

This sequence belongs to the G-protein coupled receptor 1 family. Opsin subfamily. Post-translationally, phosphorylated on some or all of the serine and threonine residues present in the C-terminal region. In terms of tissue distribution, expressed in the dorsal region of the retina and sparsely expressed in the ventral region.

It localises to the membrane. Its function is as follows. Visual pigments are the light-absorbing molecules that mediate vision. They consist of an apoprotein, opsin, covalently linked to 11-cis-retinal. This chain is Opsin, blue-sensitive (BLOP), found in Apis mellifera (Honeybee).